The chain runs to 542 residues: Polysialoglycoprotein (542 aa).

The signal sequence occupies residues 1-21 (MIMGGVRELLLVVMTVGVVKV). Positions 22–120 (SCYPVGKSQK…TSEAATGPSG (99 aa)) are excised as a propeptide. Residues 70-542 (EEYLETNEVE…GPSGDDAMDI (473 aa)) form a disordered region. Positions 78 to 95 (VESQASPNHGSSPANDAL) are enriched in polar residues. Over residues 97 to 106 (SEEKLRRVSS) the composition is skewed to basic and acidic residues. Residues 107–116 (DDAATSEAAT) are compositionally biased toward low complexity. 32 tandem repeats follow at residues 121–133 (DDAT…GPSG), 134–146 (DDAT…GPSG), 147–159 (DDAT…GPSG), 160–172 (DDAT…GPSG), 173–185 (DDAT…GPSG), 186–198 (DDAT…GPSG), 199–211 (DDAT…GPSG), 212–224 (DDAT…GPSG), 225–237 (DDAT…GPSG), 238–250 (DDAT…GPSG), 251–263 (DDAT…GPSG), 264–276 (DDAT…GPSG), 277–289 (DDAT…GPSG), 290–302 (DDAT…GPSG), 303–315 (DDAT…GPSG), 316–328 (DDAT…GPSG), 329–341 (DDAT…GPSG), 342–354 (DDAT…GPSG), 355–367 (DDAT…GPSG), 368–380 (DDAT…GPSG), 381–393 (DDAT…GPSG), 394–406 (DDAT…GPSG), 407–419 (DDAT…GPSG), 420–432 (DDAT…GPSG), 433–445 (DDAT…GPSG), 446–458 (DDAT…GPSG), 459–471 (DDAT…GPSG), 472–484 (DDAT…GPSG), 485–497 (DDAT…GPSG), 498–510 (DDAT…GPSG), 511–523 (DDAT…GPSG), and 524–536 (DDAT…GPSG). Residues 121–536 (DDATSEAATG…TSEAATGPSG (416 aa)) form a 32 X 13 AA tandem repeats of D-D-A-T-S-E-A-A-T-G-P-S-G region. O-linked (GalNAc...) threonine glycosylation occurs at Thr124. O-linked (GalNAc...) serine glycosylation is present at Ser125. 2 O-linked (GalNAc...) threonine glycosylation sites follow: Thr129 and Thr137. Ser138 carries O-linked (GalNAc...) serine glycosylation. O-linked (GalNAc...) threonine glycosylation is found at Thr142 and Thr150. O-linked (GalNAc...) serine glycosylation is present at Ser151. O-linked (GalNAc...) threonine glycans are attached at residues Thr155 and Thr163. O-linked (GalNAc...) serine glycosylation occurs at Ser164. O-linked (GalNAc...) threonine glycans are attached at residues Thr168 and Thr176. O-linked (GalNAc...) serine glycosylation occurs at Ser177. Residues Thr181 and Thr189 are each glycosylated (O-linked (GalNAc...) threonine). The O-linked (GalNAc...) serine glycan is linked to Ser190. Thr194 and Thr202 each carry an O-linked (GalNAc...) threonine glycan. Ser203 is a glycosylation site (O-linked (GalNAc...) serine). O-linked (GalNAc...) threonine glycans are attached at residues Thr207 and Thr215. Ser216 carries an O-linked (GalNAc...) serine glycan. Thr220 and Thr228 each carry an O-linked (GalNAc...) threonine glycan. Ser229 carries an O-linked (GalNAc...) serine glycan. Thr233 and Thr241 each carry an O-linked (GalNAc...) threonine glycan. The O-linked (GalNAc...) serine glycan is linked to Ser242. O-linked (GalNAc...) threonine glycans are attached at residues Thr246 and Thr254. Ser255 is a glycosylation site (O-linked (GalNAc...) serine). Thr259 and Thr267 each carry an O-linked (GalNAc...) threonine glycan. A glycan (O-linked (GalNAc...) serine) is linked at Ser268. O-linked (GalNAc...) threonine glycosylation is found at Thr272 and Thr280. An O-linked (GalNAc...) serine glycan is attached at Ser281. Residues Thr285 and Thr293 are each glycosylated (O-linked (GalNAc...) threonine). Ser294 carries an O-linked (GalNAc...) serine glycan. Thr298 and Thr306 each carry an O-linked (GalNAc...) threonine glycan. Ser307 carries an O-linked (GalNAc...) serine glycan. O-linked (GalNAc...) threonine glycans are attached at residues Thr311 and Thr319. A glycan (O-linked (GalNAc...) serine) is linked at Ser320. Thr324 and Thr332 each carry an O-linked (GalNAc...) threonine glycan. Ser333 is a glycosylation site (O-linked (GalNAc...) serine). O-linked (GalNAc...) threonine glycans are attached at residues Thr337 and Thr345. Residue Ser346 is glycosylated (O-linked (GalNAc...) serine). Thr350 and Thr358 each carry an O-linked (GalNAc...) threonine glycan. The O-linked (GalNAc...) serine glycan is linked to Ser359. O-linked (GalNAc...) threonine glycosylation is found at Thr363 and Thr371. O-linked (GalNAc...) serine glycosylation is present at Ser372. 2 O-linked (GalNAc...) threonine glycosylation sites follow: Thr376 and Thr384. A glycan (O-linked (GalNAc...) serine) is linked at Ser385. O-linked (GalNAc...) threonine glycans are attached at residues Thr389 and Thr397. Ser398 carries O-linked (GalNAc...) serine glycosylation. 2 O-linked (GalNAc...) threonine glycosylation sites follow: Thr402 and Thr410. The O-linked (GalNAc...) serine glycan is linked to Ser411. Thr415 and Thr423 each carry an O-linked (GalNAc...) threonine glycan. Ser424 carries O-linked (GalNAc...) serine glycosylation. Residues Thr428 and Thr436 are each glycosylated (O-linked (GalNAc...) threonine). O-linked (GalNAc...) serine glycosylation occurs at Ser437. O-linked (GalNAc...) threonine glycans are attached at residues Thr441 and Thr449. The O-linked (GalNAc...) serine glycan is linked to Ser450. Thr454 and Thr462 each carry an O-linked (GalNAc...) threonine glycan. An O-linked (GalNAc...) serine glycan is attached at Ser463. Thr467 and Thr475 each carry an O-linked (GalNAc...) threonine glycan. Ser476 carries an O-linked (GalNAc...) serine glycan. Thr480 and Thr488 each carry an O-linked (GalNAc...) threonine glycan. Ser489 carries an O-linked (GalNAc...) serine glycan. Thr493 and Thr501 each carry an O-linked (GalNAc...) threonine glycan. The O-linked (GalNAc...) serine glycan is linked to Ser502. Residues Thr506 and Thr514 are each glycosylated (O-linked (GalNAc...) threonine). Ser515 carries O-linked (GalNAc...) serine glycosylation. Thr519 and Thr527 each carry an O-linked (GalNAc...) threonine glycan. A glycan (O-linked (GalNAc...) serine) is linked at Ser528. O-linked (GalNAc...) threonine glycosylation is present at Thr532. Positions 537 to 542 (DDAMDI) are excised as a propeptide.

In terms of processing, most sialic acid residues exist in the form of polysialyl groups partly capped with deaminoneuraminic acid. As to expression, cortical alveoli of immature ovaries.

In terms of biological role, in response to egg activation, PSGP is discharged by exocytosis into the perivitelline space, where it undergoes rapid proteolysis into glycotridecapeptides. During fertilization and/or early development the glycotridecapeptides prevent polyspermy or are involved in the formation of a fertilization membrane. The chain is Polysialoglycoprotein from Oncorhynchus mykiss (Rainbow trout).